The primary structure comprises 231 residues: Large ribosomal subunit protein uL1 (231 aa).

It belongs to the universal ribosomal protein uL1 family. In terms of assembly, part of the 50S ribosomal subunit.

Functionally, binds directly to 23S rRNA. The L1 stalk is quite mobile in the ribosome, and is involved in E site tRNA release. In terms of biological role, protein L1 is also a translational repressor protein, it controls the translation of the L11 operon by binding to its mRNA. This is Large ribosomal subunit protein uL1 from Teredinibacter turnerae (strain ATCC 39867 / T7901).